A 461-amino-acid chain; its full sequence is Probable tubulin polyglutamylase TTLL9 (461 aa).

Over residues 1–10 (MSRQKNQNSK) the composition is skewed to polar residues. Positions 1 to 20 (MSRQKNQNSKGHGVSKGKER) are disordered. In terms of domain architecture, TTL spans 22–402 (QRTLIRFKTT…EARLTGKEKR (381 aa)). Residues Lys-149 and 155–156 (QG) each bind ATP. Gln-155 contributes to the a protein binding site. Residues 172 to 208 (RKGTSGKKPTGVETQPARANMNPSGSHDTRSSDDQKD) are disordered. The span at 198–208 (HDTRSSDDQKD) shows a compositional bias: basic and acidic residues. ATP is bound by residues 218–221 (QRYV) and 231–233 (KFD). Arg-257 provides a ligand contact to L-glutamate. 276–277 (TN) lines the ATP pocket. An L-glutamate-binding site is contributed by Lys-294. Residues Asp-348, Glu-361, and Asn-363 each coordinate Mg(2+). Lys-379 provides a ligand contact to L-glutamate.

It belongs to the tubulin--tyrosine ligase family. Mg(2+) serves as cofactor. As to expression, highly expressed in brain and testis. Expressed in heart, kidney and lung. In the brain, expressed in ependymal cilia, cortex, corpus callosum and striatum. In the testis, specifically expressed in the seminiferous tubules.

Its subcellular location is the cytoplasm. The protein resides in the cytoskeleton. The protein localises to the cilium basal body. It localises to the flagellum axoneme. The catalysed reaction is (L-glutamyl)(n)-gamma-L-glutamyl-L-glutamyl-[protein] + L-glutamate + ATP = (L-glutamyl)(n+1)-gamma-L-glutamyl-L-glutamyl-[protein] + ADP + phosphate + H(+). Functionally, probable tubulin polyglutamylase that generates side chains of glutamate on the gamma-carboxyl group of specific glutamate residues within the C-terminal tail of target proteins. Similar to TTLL1, may acquire enzymatic activity only in complex with other proteins as it is most likely lacking domains important for autonomous activity. Mediates tubulin polyglutamylation which induces establishment of microtubule heterogeneity in sperm flagella, thereby playing a role in normal motile flagella axoneme structure and sperm flagella beating pattern. This chain is Probable tubulin polyglutamylase TTLL9, found in Mus musculus (Mouse).